Reading from the N-terminus, the 703-residue chain is UvrABC system protein B (703 aa).

Residues 33 to 190 (TRIENGENDV…RRFVAMQYKR (158 aa)) enclose the Helicase ATP-binding domain. Residue 46–53 (GATGTGKT) coordinates ATP. Residues 99 to 122 (YYDYYQPEAYIPQTDTYIEKDSNI) carry the Beta-hairpin motif. A Helicase C-terminal domain is found at 436 to 589 (QIDDLLAEIK…QIAYNQEHGI (154 aa)). The UVR domain occupies 659–694 (ADLIRQLSEQMHTAAEQLQFELAARLRDEIRDLKKE).

This sequence belongs to the UvrB family. Forms a heterotetramer with UvrA during the search for lesions. Interacts with UvrC in an incision complex.

The protein localises to the cytoplasm. In terms of biological role, the UvrABC repair system catalyzes the recognition and processing of DNA lesions. A damage recognition complex composed of 2 UvrA and 2 UvrB subunits scans DNA for abnormalities. Upon binding of the UvrA(2)B(2) complex to a putative damaged site, the DNA wraps around one UvrB monomer. DNA wrap is dependent on ATP binding by UvrB and probably causes local melting of the DNA helix, facilitating insertion of UvrB beta-hairpin between the DNA strands. Then UvrB probes one DNA strand for the presence of a lesion. If a lesion is found the UvrA subunits dissociate and the UvrB-DNA preincision complex is formed. This complex is subsequently bound by UvrC and the second UvrB is released. If no lesion is found, the DNA wraps around the other UvrB subunit that will check the other stand for damage. The chain is UvrABC system protein B from Bifidobacterium longum subsp. infantis (strain ATCC 15697 / DSM 20088 / JCM 1222 / NCTC 11817 / S12).